We begin with the raw amino-acid sequence, 284 residues long: Diaminopimelate epimerase (284 aa).

The substrate site is built by asparagine 20, glutamine 53, and asparagine 73. Cysteine 82 (proton donor) is an active-site residue. Residues 83–84 (GN), asparagine 167, asparagine 200, and 218–219 (ER) each bind substrate. Cysteine 227 (proton acceptor) is an active-site residue. Residue 228–229 (GS) coordinates substrate.

This sequence belongs to the diaminopimelate epimerase family. As to quaternary structure, homodimer.

The protein resides in the cytoplasm. The catalysed reaction is (2S,6S)-2,6-diaminopimelate = meso-2,6-diaminopimelate. The protein operates within amino-acid biosynthesis; L-lysine biosynthesis via DAP pathway; DL-2,6-diaminopimelate from LL-2,6-diaminopimelate: step 1/1. Its function is as follows. Catalyzes the stereoinversion of LL-2,6-diaminopimelate (L,L-DAP) to meso-diaminopimelate (meso-DAP), a precursor of L-lysine and an essential component of the bacterial peptidoglycan. The polypeptide is Diaminopimelate epimerase (Xylella fastidiosa (strain M12)).